A 448-amino-acid polypeptide reads, in one-letter code: Potassium/proton antiporter CemA (448 aa).

4 helical membrane-spanning segments follow: residues 224-244 (ALAS…ISML), 325-345 (IILH…LFII), 373-393 (ILLL…EIVI), and 408-428 (IISC…KYWI).

This sequence belongs to the CemA family.

Its subcellular location is the plastid. The protein localises to the chloroplast inner membrane. The enzyme catalyses K(+)(in) + H(+)(out) = K(+)(out) + H(+)(in). In terms of biological role, contributes to K(+)/H(+) antiport activity by supporting proton efflux to control proton extrusion and homeostasis in chloroplasts in a light-dependent manner to modulate photosynthesis. Prevents excessive induction of non-photochemical quenching (NPQ) under continuous-light conditions. Indirectly promotes efficient inorganic carbon uptake into chloroplasts. The polypeptide is Potassium/proton antiporter CemA (Angiopteris evecta (Mule's foot fern)).